Consider the following 317-residue polypeptide: MQRSLKWFASATTLAMLFVLIGGALVTKTGSGMGCGRSWPLCNGQWVPDHITPELIIELSHRLVSGLAGIMVLILSIWAWRAIGHVQETKFLAVISFVFLVLQGLIGAAAVVWGQSDFVLALHFGISLISFAAVLLLTLLIFEIDKTFSAASLSLDGKMRFHIYGITIYSYIVVYTGALVRHTNASLACPSWPLCAKTRLLPVQFHEWVQMGHRLAAAVIIIWIAAAAIHAVRHYRRQPVIYYGWLIALLLVLAQMTTGALVVFTQLNLYIALAHAFFISCLFGVLSYLLLLALRTRRAPVKAADHSAGEAAPATLK.

The Cytoplasmic segment spans residues 1-6 (MQRSLK). The chain crosses the membrane as a helical span at residues 7-27 (WFASATTLAMLFVLIGGALVT). Residues 28 to 62 (KTGSGMGCGRSWPLCNGQWVPDHITPELIIELSHR) are Extracellular-facing. Cysteine 35 and cysteine 42 are disulfide-bonded. Glutamate 58 is a catalytic residue. Position 61 (histidine 61) interacts with heme o. A helical membrane pass occupies residues 63–83 (LVSGLAGIMVLILSIWAWRAI). Topologically, residues 84-90 (GHVQETK) are cytoplasmic. A helical membrane pass occupies residues 91 to 111 (FLAVISFVFLVLQGLIGAAAV). At 112-121 (VWGQSDFVLA) the chain is on the extracellular side. A helical membrane pass occupies residues 122-142 (LHFGISLISFAAVLLLTLLIF). Residue histidine 123 coordinates heme o. The Cytoplasmic portion of the chain corresponds to 143-159 (EIDKTFSAASLSLDGKM). A helical transmembrane segment spans residues 160 to 180 (RFHIYGITIYSYIVVYTGALV). At 181-211 (RHTNASLACPSWPLCAKTRLLPVQFHEWVQM) the chain is on the extracellular side. Residues cysteine 189 and cysteine 195 are joined by a disulfide bond. The chain crosses the membrane as a helical span at residues 212–232 (GHRLAAAVIIIWIAAAAIHAV). Residue histidine 213 participates in heme b binding. The Cytoplasmic segment spans residues 233–243 (RHYRRQPVIYY). The helical transmembrane segment at 244–264 (GWLIALLLVLAQMTTGALVVF) threads the bilayer. Topologically, residues 265 to 270 (TQLNLY) are extracellular. Residues 271–291 (IALAHAFFISCLFGVLSYLLL) form a helical membrane-spanning segment. Histidine 275 is a heme b binding site. The Cytoplasmic portion of the chain corresponds to 292-317 (LALRTRRAPVKAADHSAGEAAPATLK).

It belongs to the COX15/CtaA family. Type 1 subfamily. In terms of assembly, interacts with CtaB. The cofactor is heme b.

The protein resides in the cell membrane. It carries out the reaction Fe(II)-heme o + 2 A + H2O = Fe(II)-heme a + 2 AH2. It participates in porphyrin-containing compound metabolism; heme A biosynthesis; heme A from heme O: step 1/1. Its function is as follows. Catalyzes the conversion of heme O to heme A by two successive hydroxylations of the methyl group at C8. The first hydroxylation forms heme I, the second hydroxylation results in an unstable dihydroxymethyl group, which spontaneously dehydrates, resulting in the formyl group of heme A. This Geobacillus kaustophilus (strain HTA426) protein is Heme A synthase.